Reading from the N-terminus, the 598-residue chain is MFS transporter L2 (598 aa).

3 consecutive transmembrane segments (helical) span residues 83–103, 122–142, and 150–170; these read IAAF…ATSI, FWAG…LGSF, and SLIY…AVAN. Asparagine 171 is a glycosylation site (N-linked (GlcNAc...) asparagine). A run of 5 helical transmembrane segments spans residues 183-203, 212-232, 239-259, 277-297, and 309-329; these read GVGG…TVPL, FFGM…GAFA, WVFW…TVFL, WIGM…ITWG, and LVPL…QEKF. A glycan (N-linked (GlcNAc...) asparagine) is linked at asparagine 342. 6 consecutive transmembrane segments (helical) span residues 346-366, 383-403, 411-431, 439-459, 476-496, and 550-570; these read ALLY…LYFM, VALF…GIAI, WANW…ILLK, WIFL…AMAL, MFSF…GVVF, and YIWI…LFID.

It belongs to the major facilitator superfamily.

Its subcellular location is the membrane. Functionally, MFS transporter; part of the gene cluster that mediates the biosynthesis of squalestatin S1 (SQS1, also known as zaragozic acid A), a lead compound for the treatment of hyper-cholesterolemia by targeting squalene synthase (SS). In Phoma sp. (strain ATCC 20986 / MF5453), this protein is MFS transporter L2.